Consider the following 119-residue polypeptide: Large ribosomal subunit protein bL17 (119 aa).

This sequence belongs to the bacterial ribosomal protein bL17 family. Part of the 50S ribosomal subunit. Contacts protein L32.

This chain is Large ribosomal subunit protein bL17, found in Psychrobacter arcticus (strain DSM 17307 / VKM B-2377 / 273-4).